The following is a 325-amino-acid chain: Aquaporin-8 (325 aa).

Residues 1-10 are Cytoplasmic-facing; that stretch reads MALRSPARDY. A helical membrane pass occupies residues 11-31; it reads LVSMIGELVGTFLFLFFAFAA. The Extracellular segment spans residues 32-52; the sequence is AQTANQPNGTKPLTPNATDTS. 2 N-linked (GlcNAc...) asparagine glycosylation sites follow: N39 and N47. The helical transmembrane segment at 53–73 threads the bilayer; sequence KLLYIALAFGASLAANVWVFF. Residues 74 to 100 lie on the Cytoplasmic side of the membrane; it reads RVSGGQFNPAVTLALVLIRAVSPTKAL. Positions 81 to 83 match the NPA 1 motif; that stretch reads NPA. The helical transmembrane segment at 101-121 threads the bilayer; it reads ILIPAQLVGGSLAAAAVKGII. At 122-140 the chain is on the extracellular side; sequence PGDDILFAVSLGPGVANVQ. The chain crosses the membrane as a helical span at residues 141–161; sequence GLFIELLLTFMLVFTILMLVA. The Cytoplasmic segment spans residues 162–167; the sequence is EKTKST. Residues 168–188 form a helical membrane-spanning segment; the sequence is FVAPIGIGFSLFIGHLVGIFW. Topologically, residues 189–212 are extracellular; it reads TGAGINPARAFSPALIQASFPSYH. The short motif at 194 to 196 is the NPA 2 element; it reads NPA. The helical transmembrane segment at 213-233 threads the bilayer; sequence WIYWLGPALGSFLAAGLYLGL. Residues 234-325 are Cytoplasmic-facing; that stretch reads KEMKYELVGG…GSPDSTDLPT (92 aa). Disordered regions lie at residues 279–298 and 305–325; these read LGQF…LERG and EDDP…DLPT. The segment covering 286 to 298 has biased composition (basic and acidic residues); that stretch reads TEGHRSPVDLERG.

This sequence belongs to the MIP/aquaporin (TC 1.A.8) family.

The protein localises to the cell membrane. The enzyme catalyses H2O2(out) = H2O2(in). The catalysed reaction is H2O(in) = H2O(out). Functionally, plasma membrane water channel that regulates the reactive oxygen species (ROS)-signaling pathway through its capacity to act as a membrane channel for hydrogen peroxide uptake. Required for the formation of infection structures and infection, especially on host leaves where it is essential for the penetration into the host. Regulates the expression of proteins related to redox-regulation and intracellular signal transduction and plays a role in the distribution of mitochondria in the hyphae. The sequence is that of Aquaporin-8 from Botryotinia fuckeliana (strain B05.10) (Noble rot fungus).